The following is a 468-amino-acid chain: UDP-N-acetylmuramate--L-alanine ligase (468 aa).

Residue G117–T123 participates in ATP binding.

The protein belongs to the MurCDEF family.

The protein localises to the cytoplasm. It catalyses the reaction UDP-N-acetyl-alpha-D-muramate + L-alanine + ATP = UDP-N-acetyl-alpha-D-muramoyl-L-alanine + ADP + phosphate + H(+). It functions in the pathway cell wall biogenesis; peptidoglycan biosynthesis. Its function is as follows. Cell wall formation. The sequence is that of UDP-N-acetylmuramate--L-alanine ligase from Maricaulis maris (strain MCS10) (Caulobacter maris).